The sequence spans 1257 residues: Stromal processing peptidase, chloroplastic (1257 aa).

The N-terminal 142 residues, 1-142, are a transit peptide targeting the chloroplast; that stretch reads MAASTSTSSL…ASVKRVQLPH (142 aa). Histidine 236 serves as a coordination point for Zn(2+). Glutamate 239 acts as the Proton acceptor in catalysis. Residue histidine 240 coordinates Zn(2+). Glutamate 309 is an active-site residue. Glutamate 316 contributes to the Zn(2+) binding site. Positions 1233–1257 are disordered; the sequence is EEAGEGYPGVLPMGRGLSTMTRPTT.

It belongs to the peptidase M16 family. The cofactor is Zn(2+).

It is found in the plastid. Its subcellular location is the chloroplast stroma. Cleaves presequences (transit peptides) from chloroplastic protein precursors. Initially recognizes a precursor by binding to the C-terminus of its transit peptide and then removes the transit peptide in a single endoproteolytic step. In a next step, pursues the cleavage of transit peptide to a subfragment form. The protein is Stromal processing peptidase, chloroplastic of Pisum sativum (Garden pea).